We begin with the raw amino-acid sequence, 241 residues long: Histidine-rich protein PFHRP-III (241 aa).

The signal sequence occupies residues 1 to 21 (MVSFSKNKVLSAAVFASVLLL). Positions 52 to 76 (AHAGDAHHAHHVADAHHAHHVADAH) are enriched in basic and acidic residues. 2 disordered regions span residues 52 to 145 (AHAG…ANAH) and 195 to 241 (AHHD…HLHH). Positions 84–145 (AHHAANAHHA…ANAHHAANAH (62 aa)) are enriched in low complexity. The segment covering 195 to 231 (AHHDGAHHDDAHHDGAHHDDAHHDGAHHDGAHHDGAH) has biased composition (basic and acidic residues).

The sequence is that of Histidine-rich protein PFHRP-III from Plasmodium falciparum.